The chain runs to 437 residues: Serine carboxypeptidase-like 9 (437 aa).

The signal sequence occupies residues 1–21 (MSLILKFMLLILLVSSHHVRS). The N-linked (GlcNAc...) asparagine glycan is linked to N101. S175 is a catalytic residue. 2 disulfides stabilise this stretch: C243-C257 and C281-C293. N307 and N346 each carry an N-linked (GlcNAc...) asparagine glycan. The active site involves D362. N-linked (GlcNAc...) asparagine glycosylation is present at N378. H415 is an active-site residue.

This sequence belongs to the peptidase S10 family. In terms of tissue distribution, expressed in seedlings, leaves, flowers and siliques.

The protein localises to the secreted. It catalyses the reaction 2 1-O-(trans-sinapoyl)-beta-D-glucose = 1,2-di-O-sinapoyl beta-D-glucose + D-glucose. In terms of biological role, catalyzes the formation of 1,2-bis-O-sinapoyl beta-D-glucoside and an unidentified compound 1. The polypeptide is Serine carboxypeptidase-like 9 (SCPL9) (Arabidopsis thaliana (Mouse-ear cress)).